The chain runs to 223 residues: UPF0173 metal-dependent hydrolase THA_544 (223 aa).

This sequence belongs to the UPF0173 family.

This chain is UPF0173 metal-dependent hydrolase THA_544, found in Thermosipho africanus (strain TCF52B).